Consider the following 145-residue polypeptide: MDIHQILKQLPHRYPILLVDRVLEIEKGKRIKALKNVTMNEPFFMGHFPHHPVMPGVLMLEAMAQAAALLAFETLGVTPDDKTVYYFAGIDGARFKRPVEPGDQLIMDVTLERMKAGIFKFKGVTRVGEAIACEAELMCTMRTIA.

Residue H47 is part of the active site.

This sequence belongs to the thioester dehydratase family. FabZ subfamily.

It is found in the cytoplasm. It carries out the reaction a (3R)-hydroxyacyl-[ACP] = a (2E)-enoyl-[ACP] + H2O. Functionally, involved in unsaturated fatty acids biosynthesis. Catalyzes the dehydration of short chain beta-hydroxyacyl-ACPs and long chain saturated and unsaturated beta-hydroxyacyl-ACPs. The polypeptide is 3-hydroxyacyl-[acyl-carrier-protein] dehydratase FabZ (Polaromonas sp. (strain JS666 / ATCC BAA-500)).